The chain runs to 235 residues: Protein Thf1 (235 aa).

Residues 179–228 (LNLSSDKLQKDLDLYRSNVDKMGQLLAVIEDALEAERKKREKAKQEVATT) adopt a coiled-coil conformation.

The protein belongs to the THF1 family.

May be involved in photosynthetic membrane biogenesis. This chain is Protein Thf1, found in Rippkaea orientalis (strain PCC 8801 / RF-1) (Cyanothece sp. (strain PCC 8801)).